Consider the following 154-residue polypeptide: SsrA-binding protein (154 aa).

It belongs to the SmpB family.

The protein localises to the cytoplasm. Functionally, required for rescue of stalled ribosomes mediated by trans-translation. Binds to transfer-messenger RNA (tmRNA), required for stable association of tmRNA with ribosomes. tmRNA and SmpB together mimic tRNA shape, replacing the anticodon stem-loop with SmpB. tmRNA is encoded by the ssrA gene; the 2 termini fold to resemble tRNA(Ala) and it encodes a 'tag peptide', a short internal open reading frame. During trans-translation Ala-aminoacylated tmRNA acts like a tRNA, entering the A-site of stalled ribosomes, displacing the stalled mRNA. The ribosome then switches to translate the ORF on the tmRNA; the nascent peptide is terminated with the 'tag peptide' encoded by the tmRNA and targeted for degradation. The ribosome is freed to recommence translation, which seems to be the essential function of trans-translation. The sequence is that of SsrA-binding protein from Enterococcus hirae (strain ATCC 9790 / DSM 20160 / JCM 8729 / LMG 6399 / NBRC 3181 / NCIMB 6459 / NCDO 1258 / NCTC 12367 / WDCM 00089 / R).